Here is a 339-residue protein sequence, read N- to C-terminus: Dihydroorotase (339 aa).

Zn(2+)-binding residues include H12 and H14. Residues 14–16 and N40 contribute to the substrate site; that span reads HVR. Zn(2+) is bound by residues K94, H133, H167, and D239. The residue at position 94 (K94) is an N6-carboxylysine. H133 contributes to the substrate binding site. Residue D239 is part of the active site. The substrate site is built by H243 and A255.

The protein belongs to the metallo-dependent hydrolases superfamily. DHOase family. Class II DHOase subfamily. In terms of assembly, homodimer. Requires Zn(2+) as cofactor.

The catalysed reaction is (S)-dihydroorotate + H2O = N-carbamoyl-L-aspartate + H(+). Its pathway is pyrimidine metabolism; UMP biosynthesis via de novo pathway; (S)-dihydroorotate from bicarbonate: step 3/3. Its function is as follows. Catalyzes the reversible cyclization of carbamoyl aspartate to dihydroorotate. This Helicobacter pylori (strain G27) protein is Dihydroorotase.